A 918-amino-acid chain; its full sequence is Bromodomain testis-specific protein (918 aa).

The segment at 1-26 (MSDVKPPQHFTMNGNPPPPEFKNPKK) is disordered. Residues 29 to 135 (RLTNHLQYIE…KLFLEKVAEM (107 aa)) form the Bromo 1 domain. Residues 204 to 215 (NGVKRKADTTTP) carry the Nuclear localization signal motif. 5 disordered regions span residues 241 to 267 (RGSGRPIKPPCKDLPESPPQHQVGRRT), 379 to 430 (EPKN…RAHR), 575 to 712 (KNKP…SLVS), 738 to 764 (IPPLLSPLTSPSAAMPATGSQSTSSSQ), and 862 to 899 (DTPKAPEPSSVLQNSVDREREMARKREQERRRREAMSG). Residues 267-376 (TKLSERLKYC…DVFEFRFSKI (110 aa)) enclose the Bromo 2 domain. Over residues 399 to 416 (SPSSSESSDSESSSPENS) the composition is skewed to low complexity. Residues 426–452 (ERAHRLASLEEQQLKAVREQLQLLTQT) adopt a coiled-coil conformation. Residues 496–578 (DSEEEMNTLP…GCLRKKKNKP (83 aa)) form the NET domain. The segment covering 575–584 (KNKPPKKSKI) has biased composition (basic residues). Positions 605–617 (KIETDGEIKDTTH) are enriched in basic and acidic residues. Composition is skewed to low complexity over residues 622-648 (SDSSSSSSSSDSSSSDSSSSDSCDSDS) and 739-764 (PPLLSPLTSPSAAMPATGSQSTSSSQ). Positions 815–902 (EKELTTASRG…RREAMSGVID (88 aa)) form a coiled coil. The span at 877 to 896 (VDREREMARKREQERRRREA) shows a compositional bias: basic and acidic residues.

Belongs to the BET family.

The protein resides in the nucleus. Functionally, testis-specific chromatin protein that specifically binds histone H4 acetylated at 'Lys-5' and 'Lys-8' (H4K5ac and H4K8ac, respectively) and plays a key role in spermatogenesis. Required in late pachytene spermatocytes: plays a role in meiotic and post-meiotic cells by binding to acetylated histones at the promoter of specific meiotic and post-meiotic genes, facilitating their activation at the appropriate time. In the post-meiotic phase of spermatogenesis, binds to hyperacetylated histones and participates in their general removal from DNA. Also recognizes and binds a subset of butyrylated histones: able to bind histone H4 butyrylated at 'Lys-8' (H4K8ac), while it is not able to bind H4 butyrylated at 'Lys-5' (H4K5ac). The chain is Bromodomain testis-specific protein (brdt) from Danio rerio (Zebrafish).